Consider the following 412-residue polypeptide: Alanyl-tRNA editing protein Aarsd1-B (412 aa).

Histidine 108, histidine 112, cysteine 208, and histidine 212 together coordinate Zn(2+).

Belongs to the class-II aminoacyl-tRNA synthetase family. Alax-L subfamily. Zn(2+) is required as a cofactor.

Its subcellular location is the cytoplasm. Its function is as follows. Functions in trans to edit the amino acid moiety from incorrectly charged tRNA(Ala). The polypeptide is Alanyl-tRNA editing protein Aarsd1-B (aarsd1-b) (Xenopus laevis (African clawed frog)).